Consider the following 143-residue polypeptide: Small ribosomal subunit protein bS6 (143 aa).

The tract at residues 97 to 143 is disordered; the sequence is DTEQSLIMKSKDEKGDKHERSERRRRDDEEGDVPAATDTDGDNAEAA. The segment covering 105 to 124 has biased composition (basic and acidic residues); that stretch reads KSKDEKGDKHERSERRRRDD.

The protein belongs to the bacterial ribosomal protein bS6 family.

In terms of biological role, binds together with bS18 to 16S ribosomal RNA. This chain is Small ribosomal subunit protein bS6, found in Xanthomonas oryzae pv. oryzae (strain MAFF 311018).